The sequence spans 610 residues: Nuclear factor 7, ovary (610 aa).

Residues 21 to 75 (NVGSTYPCKRSDGSQHDADIVKTRYNKQAGREEYYVHYVGLNRRQNEWVDKSRLV) form the Tudor-knot domain. The segment at 79-127 (PPKEVETNGTDQEEMTEPTEQPDSKTPQKRKLEEPEPEPKKAKVEDKDA) is disordered. Residue threonine 104 is modified to Phosphothreonine; by CDK1. Over residues 108–127 (RKLEEPEPEPKKAKVEDKDA) the composition is skewed to basic and acidic residues. The RING-type zinc finger occupies 146-186 (CPLCVELFKDPVMVACGHNFCRSCIDKVWEGQSSFACPECK). Residues 220-261 (RPLEKCSEHDERLKLYCKDDGTLGCVICRDSLKHASHNFLPI) form a B box-type zinc finger. Zn(2+) contacts are provided by cysteine 225, histidine 228, cysteine 247, and histidine 253. Residues 295-374 (DKIEQHNKNV…AKERMEETDS (80 aa)) adopt a coiled-coil conformation. Positions 415 to 610 (PIQYIMWKEL…VDALRFVHNQ (196 aa)) constitute a B30.2/SPRY domain.

As to quaternary structure, monomer. In terms of tissue distribution, abundant in oocytes. At the neurula stage, low expression in dorsal embryo region including neural folds and somites.

The protein resides in the nucleus. Functionally, transcription factor that determines dorsal-ventral body axis. In Xenopus laevis (African clawed frog), this protein is Nuclear factor 7, ovary.